The primary structure comprises 249 residues: Aliphatic sulfonates import ATP-binding protein SsuB 2 (249 aa).

The ABC transporter domain occupies 15 to 231 (VHVRDLARRF…DHGDPRFAQF (217 aa)). 47 to 54 (GRSGSGKS) is an ATP binding site.

This sequence belongs to the ABC transporter superfamily. Aliphatic sulfonates importer (TC 3.A.1.17.2) family. In terms of assembly, the complex is composed of two ATP-binding proteins (SsuB), two transmembrane proteins (SsuC) and a solute-binding protein (SsuA).

It localises to the cell inner membrane. It catalyses the reaction ATP + H2O + aliphatic sulfonate-[sulfonate-binding protein]Side 1 = ADP + phosphate + aliphatic sulfonateSide 2 + [sulfonate-binding protein]Side 1.. Its function is as follows. Part of the ABC transporter complex SsuABC involved in aliphatic sulfonates import. Responsible for energy coupling to the transport system. In Rhizobium johnstonii (strain DSM 114642 / LMG 32736 / 3841) (Rhizobium leguminosarum bv. viciae), this protein is Aliphatic sulfonates import ATP-binding protein SsuB 2.